Consider the following 310-residue polypeptide: Probable GTP 3',8-cyclase (310 aa).

In terms of domain architecture, Radical SAM core spans 5-232 (RFGRPVTNLR…RRRKYFIPID (228 aa)). Residue R14 coordinates GTP. [4Fe-4S] cluster contacts are provided by C21 and C25. Residue Y27 participates in S-adenosyl-L-methionine binding. C28 serves as a coordination point for [4Fe-4S] cluster. Position 61 (K61) interacts with GTP. Residue G65 coordinates S-adenosyl-L-methionine. T90 contacts GTP. S114 contacts S-adenosyl-L-methionine. Residue K150 participates in GTP binding. M189 lines the S-adenosyl-L-methionine pocket. 2 residues coordinate [4Fe-4S] cluster: C250 and C253. A GTP-binding site is contributed by 255 to 257 (RLR). A [4Fe-4S] cluster-binding site is contributed by C267.

This sequence belongs to the radical SAM superfamily. MoaA family. Requires [4Fe-4S] cluster as cofactor.

It carries out the reaction GTP + AH2 + S-adenosyl-L-methionine = (8S)-3',8-cyclo-7,8-dihydroguanosine 5'-triphosphate + 5'-deoxyadenosine + L-methionine + A + H(+). It participates in cofactor biosynthesis; molybdopterin biosynthesis. Catalyzes the cyclization of GTP to (8S)-3',8-cyclo-7,8-dihydroguanosine 5'-triphosphate. This chain is Probable GTP 3',8-cyclase, found in Pyrococcus horikoshii (strain ATCC 700860 / DSM 12428 / JCM 9974 / NBRC 100139 / OT-3).